The primary structure comprises 68 residues: Probable tautomerase jhp_0858 (68 aa).

Catalysis depends on proline 2, which acts as the Proton acceptor; via imino nitrogen.

It belongs to the 4-oxalocrotonate tautomerase family.

This chain is Probable tautomerase jhp_0858, found in Helicobacter pylori (strain J99 / ATCC 700824) (Campylobacter pylori J99).